The following is a 387-amino-acid chain: Carbamoyl phosphate synthase small chain (387 aa).

Residues 1–196 (MEGVLSQLAV…FSINKQKFLF (196 aa)) are CPSase. Residues Ser-51, Gly-245, and Gly-247 each contribute to the L-glutamine site. In terms of domain architecture, Glutamine amidotransferase type-1 spans 197–384 (HVVVYDFGVK…IKLIVSQKTT (188 aa)). The active-site Nucleophile is the Cys-273. Leu-274, Gln-277, Asn-315, and Phe-318 together coordinate L-glutamine. Catalysis depends on residues His-357 and Glu-359.

Belongs to the CarA family. Composed of two chains; the small (or glutamine) chain promotes the hydrolysis of glutamine to ammonia, which is used by the large (or ammonia) chain to synthesize carbamoyl phosphate. Tetramer of heterodimers (alpha,beta)4.

The enzyme catalyses hydrogencarbonate + L-glutamine + 2 ATP + H2O = carbamoyl phosphate + L-glutamate + 2 ADP + phosphate + 2 H(+). It catalyses the reaction L-glutamine + H2O = L-glutamate + NH4(+). The protein operates within amino-acid biosynthesis; L-arginine biosynthesis; carbamoyl phosphate from bicarbonate: step 1/1. Its pathway is pyrimidine metabolism; UMP biosynthesis via de novo pathway; (S)-dihydroorotate from bicarbonate: step 1/3. Its function is as follows. Small subunit of the glutamine-dependent carbamoyl phosphate synthetase (CPSase). CPSase catalyzes the formation of carbamoyl phosphate from the ammonia moiety of glutamine, carbonate, and phosphate donated by ATP, constituting the first step of 2 biosynthetic pathways, one leading to arginine and/or urea and the other to pyrimidine nucleotides. The small subunit (glutamine amidotransferase) binds and cleaves glutamine to supply the large subunit with the substrate ammonia. This chain is Carbamoyl phosphate synthase small chain, found in Buchnera aphidicola subsp. Acyrthosiphon pisum (strain APS) (Acyrthosiphon pisum symbiotic bacterium).